Here is a 365-residue protein sequence, read N- to C-terminus: DNA replication and repair protein RecF (365 aa).

30 to 37 serves as a coordination point for ATP; the sequence is GNNGMGKT.

The protein belongs to the RecF family.

The protein resides in the cytoplasm. The RecF protein is involved in DNA metabolism; it is required for DNA replication and normal SOS inducibility. RecF binds preferentially to single-stranded, linear DNA. It also seems to bind ATP. The protein is DNA replication and repair protein RecF of Parabacteroides distasonis (strain ATCC 8503 / DSM 20701 / CIP 104284 / JCM 5825 / NCTC 11152).